The sequence spans 244 residues: 1-(5-phosphoribosyl)-5-[(5-phosphoribosylamino)methylideneamino] imidazole-4-carboxamide isomerase (244 aa).

Aspartate 13 functions as the Proton acceptor in the catalytic mechanism. The active-site Proton donor is aspartate 132.

Belongs to the HisA/HisF family.

The protein localises to the cytoplasm. It catalyses the reaction 1-(5-phospho-beta-D-ribosyl)-5-[(5-phospho-beta-D-ribosylamino)methylideneamino]imidazole-4-carboxamide = 5-[(5-phospho-1-deoxy-D-ribulos-1-ylimino)methylamino]-1-(5-phospho-beta-D-ribosyl)imidazole-4-carboxamide. Its pathway is amino-acid biosynthesis; L-histidine biosynthesis; L-histidine from 5-phospho-alpha-D-ribose 1-diphosphate: step 4/9. The polypeptide is 1-(5-phosphoribosyl)-5-[(5-phosphoribosylamino)methylideneamino] imidazole-4-carboxamide isomerase (Renibacterium salmoninarum (strain ATCC 33209 / DSM 20767 / JCM 11484 / NBRC 15589 / NCIMB 2235)).